The sequence spans 82 residues: MSYEKVLQAGKTVVGTKQTVRALKEGKALEVIVAEDADPSIIDKVMEAAKEANVPVTKVDSMKKLGKACKIQVGAAAVAIIR.

This sequence belongs to the eukaryotic ribosomal protein eL8 family.

The polypeptide is RNA-binding protein GWCH70_0105 (Geobacillus sp. (strain WCH70)).